The following is a 348-amino-acid chain: Ion-translocating oxidoreductase complex subunit D (348 aa).

Over 1–22 (MAFFIASSPHLRSKRSTADVMR) the chain is Cytoplasmic. A run of 2 helical transmembrane segments spans residues 23-43 (WVLVCALPGLIAQTYFFGYGT) and 44-64 (LIQLLLAISVAVALEAGIMLL). At 65–71 (RKRSPIS) the chain is on the cytoplasmic side. A helical transmembrane segment spans residues 72–91 (ALRDYSAVVTAWLLAVAIPP). The Periplasmic segment spans residues 92 to 94 (LSP). Residues 95–117 (WWVVVIGLIFAIVIAKHLYGGLG) traverse the membrane as a helical segment. Residues 118–125 (QNPFNPAM) lie on the Cytoplasmic side of the membrane. The chain crosses the membrane as a helical span at residues 126–146 (IAYVVLLISFPVQMTSWMAPI). At 147 to 213 (KLTAEPSSLV…ETLTQPQFSG (67 aa)) the chain is on the periplasmic side. FMN phosphoryl threonine is present on Thr187. The helical transmembrane segment at 214–234 (FAGIGWEWVNIAYLLGGLILL) threads the bilayer. Residues 235–242 (KLRIIRWH) lie on the Cytoplasmic side of the membrane. A helical membrane pass occupies residues 243–263 (IPVAMLAGLVFTALLAQLFAP). At 264-265 (GT) the chain is on the periplasmic side. A helical membrane pass occupies residues 266-286 (TASPMIHLLSGATMLGAFFIA). At 287–299 (TDPVSASTTDKGR) the chain is on the cytoplasmic side. 2 helical membrane-spanning segments follow: residues 300–320 (LIYGFFIGAMVFLIRSWGGFP) and 321–341 (DGVAFAVLLANMCVPLIDYYT). At 342–348 (KPRTYGH) the chain is on the cytoplasmic side.

The protein belongs to the NqrB/RnfD family. As to quaternary structure, the complex is composed of six subunits: RnfA, RnfB, RnfC, RnfD, RnfE and RnfG. FMN serves as cofactor.

It is found in the cell inner membrane. Functionally, part of a membrane-bound complex that couples electron transfer with translocation of ions across the membrane. This Vibrio cholerae serotype O1 (strain ATCC 39541 / Classical Ogawa 395 / O395) protein is Ion-translocating oxidoreductase complex subunit D.